The chain runs to 833 residues: RNA-binding protein 5-A (833 aa).

The tract at residues 1–87 (MGSDKRVSRS…GYHSDGDYMD (87 aa)) is disordered. Residues 102 to 182 (KTIMLRGLPI…KTIAMHYSNP (81 aa)) enclose the RRM 1 domain. A RanBP2-type zinc finger spans residues 185–214 (KFEDWLCNKCGLYNFRRRLKCFRCGAAKAE). Residues 241–325 (SAIILRNIGP…KTIGVDFAKS (85 aa)) form the RRM 2 domain. Residues 396–428 (TGAAEQGTAPQAESSSPVPATTSAVVCQSPQMY) show a composition bias toward polar residues. 2 disordered regions span residues 396-458 (TGAA…EEAA) and 523-559 (AADG…TAQQ). Residues 429–458 (QQPGSPTQSSTSTVAASATPASGTSAEEAA) are compositionally biased toward low complexity. The segment at 667–692 (LACLLCRRQFPNKDALTRHQQLSDLH) adopts a C2H2-type zinc-finger fold. Residues 761–807 (NSNIGNKMLQAMGWKEGSGLGRKSQGITAPIQAQVRMRGAGLGAKGS) form the G-patch domain.

Belongs to the RBM5/RBM10 family. As to quaternary structure, component of the spliceosome A complex (also known as the prespliceosome). Appears to dissociate from the spliceosome upon formation of the spliceosome B complex (also known as the precatalytic spliceosome), in which the heterotrimeric U4/U6.U5 snRNPs are bound.

It is found in the nucleus. Functionally, component of the spliceosome A complex. Regulates alternative splicing of a number of mRNAs. May modulate splice site pairing after recruitment of the U1 and U2 snRNPs to the 5' and 3' splice sites of the intron. This is RNA-binding protein 5-A (rbm5-a) from Xenopus laevis (African clawed frog).